The sequence spans 393 residues: ATP phosphoribosyltransferase regulatory subunit (393 aa).

It belongs to the class-II aminoacyl-tRNA synthetase family. HisZ subfamily. As to quaternary structure, heteromultimer composed of HisG and HisZ subunits.

Its subcellular location is the cytoplasm. The protein operates within amino-acid biosynthesis; L-histidine biosynthesis; L-histidine from 5-phospho-alpha-D-ribose 1-diphosphate: step 1/9. In terms of biological role, required for the first step of histidine biosynthesis. May allow the feedback regulation of ATP phosphoribosyltransferase activity by histidine. The chain is ATP phosphoribosyltransferase regulatory subunit from Nitrosospira multiformis (strain ATCC 25196 / NCIMB 11849 / C 71).